Reading from the N-terminus, the 470-residue chain is MLSVFNTLTRQKEPFKPITPGVVKMYVCGPTVYNYIHIGNARSAIAFDTIRRYFEYCGYHVDYVSNFTDVDDKLIKRAAEDHTTVPAVADRFIKAFMEDTTAVNIEPATVHPRASENIPEIIAFVQALIEKGYAYESAGDVYYRARKFKKYGQLSDQRIDDLEVGASQHTADEETDRKEDPIDFALWKAAKPGEISWESPWGAGRPGWHIECSVMSTKYLGDTFDIHGGGQDLEFPHHENEIAQSEAKTGKTFANYWLHNGFVTVGDDNEKMSKSLGNFVTVHDIIKTVDPQVLRFFMATTQYRRPIQYTQANLDEAANNLDKLRNAYRNLTFRLQDATNGTDTAVAEQLQTLITNFGTAMDDDFNVQNGVAAVYELAKLANVYAAKATVQKETLIALQKALVQLTGVFGVTFETANATLADDAIQALIDEREAARKAKDFAKADQIRDDLKVQGIMLEDTPQGVRFRKE.

Cys28 serves as a coordination point for Zn(2+). Residues 30–40 carry the 'HIGH' region motif; it reads PTVYNYIHIGN. Cys212, His237, and Glu241 together coordinate Zn(2+). A 'KMSKS' region motif is present at residues 271 to 275; the sequence is KMSKS. Lys274 serves as a coordination point for ATP.

Belongs to the class-I aminoacyl-tRNA synthetase family. Monomer. The cofactor is Zn(2+).

The protein localises to the cytoplasm. The enzyme catalyses tRNA(Cys) + L-cysteine + ATP = L-cysteinyl-tRNA(Cys) + AMP + diphosphate. This chain is Cysteine--tRNA ligase, found in Lactiplantibacillus plantarum (strain ATCC BAA-793 / NCIMB 8826 / WCFS1) (Lactobacillus plantarum).